The primary structure comprises 411 residues: 2,3-bisphosphoglycerate-independent phosphoglycerate mutase 1 (411 aa).

This sequence belongs to the BPG-independent phosphoglycerate mutase family. A-PGAM subfamily. Homotetramer. Requires Mg(2+) as cofactor.

It catalyses the reaction (2R)-2-phosphoglycerate = (2R)-3-phosphoglycerate. Its pathway is carbohydrate degradation; glycolysis; pyruvate from D-glyceraldehyde 3-phosphate: step 3/5. With respect to regulation, inhibited to approximately 20% by EDTA. Functionally, catalyzes the interconversion of 2-phosphoglycerate and 3-phosphoglycerate. This chain is 2,3-bisphosphoglycerate-independent phosphoglycerate mutase 1 (apgM1), found in Methanocaldococcus jannaschii (strain ATCC 43067 / DSM 2661 / JAL-1 / JCM 10045 / NBRC 100440) (Methanococcus jannaschii).